We begin with the raw amino-acid sequence, 355 residues long: 3-dehydroquinate synthase (355 aa).

NAD(+)-binding positions include 71 to 76 (EGEERK), 105 to 109 (GVVGD), 129 to 130 (TS), K142, and K151. Residues E184, H246, and H263 each contribute to the Zn(2+) site.

It belongs to the sugar phosphate cyclases superfamily. Dehydroquinate synthase family. It depends on NAD(+) as a cofactor. Co(2+) is required as a cofactor. Zn(2+) serves as cofactor.

It localises to the cytoplasm. It catalyses the reaction 7-phospho-2-dehydro-3-deoxy-D-arabino-heptonate = 3-dehydroquinate + phosphate. It participates in metabolic intermediate biosynthesis; chorismate biosynthesis; chorismate from D-erythrose 4-phosphate and phosphoenolpyruvate: step 2/7. Its function is as follows. Catalyzes the conversion of 3-deoxy-D-arabino-heptulosonate 7-phosphate (DAHP) to dehydroquinate (DHQ). This Streptococcus pneumoniae (strain ATCC BAA-255 / R6) protein is 3-dehydroquinate synthase.